The chain runs to 207 residues: Large ribosomal subunit protein uL4 (207 aa).

The segment at H49–I78 is disordered.

This sequence belongs to the universal ribosomal protein uL4 family. Part of the 50S ribosomal subunit.

One of the primary rRNA binding proteins, this protein initially binds near the 5'-end of the 23S rRNA. It is important during the early stages of 50S assembly. It makes multiple contacts with different domains of the 23S rRNA in the assembled 50S subunit and ribosome. Its function is as follows. Forms part of the polypeptide exit tunnel. The protein is Large ribosomal subunit protein uL4 of Streptococcus sanguinis (strain SK36).